We begin with the raw amino-acid sequence, 242 residues long: Phosphatidylcholine synthase (242 aa).

Over 1–15 (MKIFNYKRVPYAEMR) the chain is Cytoplasmic. A helical transmembrane segment spans residues 16-36 (AFSVHILTASGSFLAFLGVVA). Over 37–41 (AAEHR) the chain is Periplasmic. Residues 42–62 (FIDMFWWLGLALLVDGIDGPI) traverse the membrane as a helical segment. The Cytoplasmic segment spans residues 63 to 76 (ARKVRVKEVLPNWS). Residues 77–97 (GDTLDNIIDYVTYVLLPAFAL) form a helical membrane-spanning segment. The Periplasmic segment spans residues 98-100 (YQS). The chain crosses the membrane as a helical span at residues 101–121 (GMIGEPWSFVAAGMIVVSSAI). Residues 122-133 (YYADMGMKTDEY) are Cytoplasmic-facing. Residues 134 to 154 (FFSGFPVVWNMIVFTLFVIDA) traverse the membrane as a helical segment. Residues 155-159 (SATTA) lie on the Periplasmic side of the membrane. The chain crosses the membrane as a helical span at residues 160 to 180 (LTVVIVSVVLTFLPINFLHPV). Topologically, residues 181 to 187 (RVKRLRP) are cytoplasmic. A helical membrane pass occupies residues 188 to 208 (LNLGVFFLWSALGIFSLLMHF). Residues 209–214 (DTPEWA) are Periplasmic-facing. A helical transmembrane segment spans residues 215-235 (LILFIVTGAYLYVIGAVLQFF). Residues 236–242 (PALGRET) are Cytoplasmic-facing.

It belongs to the CDP-alcohol phosphatidyltransferase class-I family. Mn(2+) is required as a cofactor.

The protein resides in the cell inner membrane. The catalysed reaction is a CDP-1,2-diacyl-sn-glycerol + choline = a 1,2-diacyl-sn-glycero-3-phosphocholine + CMP + H(+). Functionally, condenses choline with CDP-diglyceride to produce phosphatidylcholine and CMP. The sequence is that of Phosphatidylcholine synthase from Rhizobium johnstonii (strain DSM 114642 / LMG 32736 / 3841) (Rhizobium leguminosarum bv. viciae).